Consider the following 656-residue polypeptide: MNAMLNIKEGEFTSTIYTLIHEHKFNDAIRILQYQHERNPKNLAALSLLAYCYYYTQDFMNAADCYSQLSYNFPQYSQYKLYHAQSLYNAFRPADALAVVSMIQDENLLNESVKLEAAIKYQEDDLVNCRILVEQLPENDAAVIINTACIDYKEGNYEEALKKFNEATEFSGYQSGLAYSIALCHYRRGDYDSALKLISEIINRGVKDHPEFNIGMVTEGIDVNFIQNTQKLHESALIEAFNLKFAIYYRTKDFKAAKESLTDMPPRNEHDADPITLHNLAISNANSDFGDSSAKLQFLLGINPFPQETFANLLFLYCKNDYFGLAADVLAENPSHTFYCLNEYQFNLLEALIYMPTNPEESLKKLEKLEKECLDRLRKTAIEIQIKKEQKTTDSDDSLEMRNLIESYDDSLEMYLPVLMTYAKYYWDKRDYQAVEKLFRNSVDYCKEHDTWKLNVAHTIFMQEKKYKDAAAFYEPIVHKKYDDGILEVPAMILANLVVCYIMTNQTDEAELILKAVENEEEAALMMKPNEKFFHNSIISLVIGSLYCSKGNFEFGISRVVKALEPPEKKLGVDTWYYAKRCIVAAIELMAKNLLVMRDSVVMEVIQFLTSCEVPGRNIYTVPDDLFEQAGESKVKCNVTYEARMIKAALLMVFND.

TPR repeat units follow at residues 9-42, 43-76, 141-174, 176-208, 238-271, 378-412, 416-449, 451-484, and 537-570; these read EGEF…NPKN, LAAL…FPQY, AAVI…SGYQ, GLAY…GVKD, IEAF…NEHD, RKTA…DDSL, LPVL…CKEH, TWKL…KYDD, and SIIS…PEKK.

This sequence belongs to the TTC30/dfy-1/fleer family. In terms of assembly, component of the IFT complex B composed of at least che-2, che-13, dyf-1, dyf-3, dyf-6, dyf-11, dyf-13, ift-20, ift-74, ift-81, ifta-2, osm-1, osm-5 and osm-6. Expressed in most amphid, both phasmid and several labial-quadrant neurons.

It localises to the cell projection. It is found in the cilium. Functionally, plays a role in anterograde intraflagellar transport (IFT), the process by which cilia precursors are transported from the base of the cilium to the site of their incorporation at the tip. Specifically required for the kinesin osm-3 to dock onto and move the IFT particles which contain these precursors. Component of the intraflagellar transport (IFT) complex B required for transport of proteins in the motile cilium. May be required for ciliary entrance and transport of specific ciliary cargo proteins such as che-3 which are related to motility. Required for polyglutamylation of axonemal tubulin in sensory cilia. The chain is Tetratricopeptide repeat protein 30 homolog from Caenorhabditis elegans.